We begin with the raw amino-acid sequence, 309 residues long: Replication factor C subunit 4 (309 aa).

ATP-binding positions include valine 5, valine 17, glycine 42–threonine 50, asparagine 134, and arginine 192.

This sequence belongs to the activator 1 small subunits family. Component of the replication factor C (RFC) complex.

Its subcellular location is the nucleus. Functionally, component of ATP-dependent clamp loader (RFC and RFC-like) complexes for DNA clamps. During a clamp loading circle, the RFC:clamp complex binds to DNA and the recognition of the double-stranded/single-stranded junction stimulates ATP hydrolysis by RFC. The complex presumably provides bipartite ATP sites in which one subunit supplies a catalytic site for hydrolysis of ATP bound to the neighboring subunit. Dissociation of RFC from the clamp leaves the clamp encircling DNA. Component of the replication factor C (RFC or activator 1) complex which acts during elongation of primed DNA templates by DNA polymerase delta and epsilon. RFC has an essential but redundant activity in sister chromatid cohesion establishment. In Encephalitozoon cuniculi (strain GB-M1) (Microsporidian parasite), this protein is Replication factor C subunit 4 (RFC4).